The chain runs to 627 residues: Pheromone B alpha 2 receptor (627 aa).

At 1–7 the chain is on the extracellular side; that stretch reads MLDPTYP. A helical transmembrane segment spans residues 8-28; sequence AFPIFAFLGIVCCLVPLPWHL. Over 29-35 the chain is Cytoplasmic; it reads QSWNSGT. Residues 36–56 form a helical membrane-spanning segment; sequence CFLMIWTAVACLNMFVNSIIW. Residues 57-69 lie on the Extracellular side of the membrane; the sequence is KDHAQNVAPVWCE. A helical transmembrane segment spans residues 70–90; sequence ISIRITLGASVGIPASSLCIV. The Cytoplasmic segment spans residues 91 to 102; the sequence is RRLYSIAKKFRA. The chain crosses the membrane as a helical span at residues 103 to 123; it reads VMVDALICVLFPILYIILQIV. The Extracellular segment spans residues 124–150; sequence VQGHRFNILENIGCFPAIINTPLTYPL. The helical transmembrane segment at 151 to 171 threads the bilayer; that stretch reads TFMWPVLIGVISFIYSTLALI. Residues 172 to 197 lie on the Cytoplasmic side of the membrane; sequence QFNRHRLQFTQFLHSNSTLSVSRYLR. The helical transmembrane segment at 198 to 218 threads the bilayer; the sequence is LMALAMTEMMCTTPMGVFVII. Residues 219-260 are Extracellular-facing; sequence LNAKATPVSPYVSWAVTHYGYGRIDQVPAIIWRSNRLLVASY. The helical transmembrane segment at 261-281 threads the bilayer; the sequence is ELTRWSSPAIALIFFFYFGFA. At 282–627 the chain is on the cytoplasmic side; it reads QEARRNYAAA…ASPRTHRASV (346 aa). Disordered regions lie at residues 363–405, 479–505, and 518–627; these read LPRP…SSPI, TVPQHNTADEPASPALPDTPSSCSSSA, and LPST…RASV. The segment covering 372–387 has biased composition (low complexity); that stretch reads SSSGFSSSDSTRFGSS. Composition is skewed to polar residues over residues 519–533 and 545–555; these read PSTTDVTRGTGSLPT and SLSQLFGISSM. Low complexity predominate over residues 569–607; that stretch reads ATGTASPTTTAPAPASTTIAPASATMAPATTTTAPTTIA.

Belongs to the G-protein coupled receptor 4 family.

It is found in the cell membrane. Receptor for the BAP2 pheromone, a prenylated mating factor. The receptor/pheromone interaction may have a role in the fusion of clamp cells. In Schizophyllum commune (Split gill fungus), this protein is Pheromone B alpha 2 receptor (BAR2).